The following is a 156-amino-acid chain: DNA gyrase inhibitor (156 aa).

It belongs to the DNA gyrase inhibitor family. As to quaternary structure, interacts with DNA gyrase.

Its subcellular location is the cytoplasm. In terms of biological role, inhibits the supercoiling activity of DNA gyrase. Acts by inhibiting DNA gyrase at an early step, prior to (or at the step of) binding of DNA by the gyrase. It protects cells against toxins that target DNA gyrase, by inhibiting activity of these toxins and reducing the formation of lethal double-strand breaks in the cell. In Serratia proteamaculans (strain 568), this protein is DNA gyrase inhibitor.